The chain runs to 252 residues: Intraflagellar transport associated protein 2 (252 aa).

GTP-binding positions include 35–42 (GPPKAGKT) and 118–125 (WDVSGDKK).

The protein belongs to the small GTPase superfamily. Rab family. Component of the IFT complex B composed of at least che-2, che-13, dyf-1, dyf-3, dyf-6, dyf-11, dyf-13, ift-20, ift-74, ift-81, ifta-2, osm-1, osm-5 and osm-6. Ciliated sensory neurons.

The protein resides in the cytoplasm. The protein localises to the cytoskeleton. Its subcellular location is the cilium axoneme. Component of the intraflagellar transport (IFT) complex B required for transport of proteins in the motile cilium. May be required for ciliary entrance and transport of specific ciliary cargo proteins such as che-3 which are related to motility. Regulates specific signaling activities in the cilia, such as the daf-2/insulin receptor-like transduction pathway. This chain is Intraflagellar transport associated protein 2, found in Caenorhabditis elegans.